A 301-amino-acid chain; its full sequence is Ribosomal protein L11 methyltransferase (301 aa).

4 residues coordinate S-adenosyl-L-methionine: T146, G167, D189, and N234.

The protein belongs to the methyltransferase superfamily. PrmA family.

It is found in the cytoplasm. The catalysed reaction is L-lysyl-[protein] + 3 S-adenosyl-L-methionine = N(6),N(6),N(6)-trimethyl-L-lysyl-[protein] + 3 S-adenosyl-L-homocysteine + 3 H(+). In terms of biological role, methylates ribosomal protein L11. The polypeptide is Ribosomal protein L11 methyltransferase (Acinetobacter baumannii (strain AB307-0294)).